The following is a 156-amino-acid chain: MKALLIAAGVAALSSTAMAAKLDEKVPYPKADAGFTRQVIHLPKQDAEDAFKVEIIAGKTLEADCNQQRLGGELEEHTLEGWGYSYYRLDKVSGPMSTMMACPGQKKEQRFIPVVGEGFLLRYNSKLPIVVYAPKDVEVRYRIWSASEKVEKAVSE.

The first 19 residues, 1-19 (MKALLIAAGVAALSSTAMA), serve as a signal peptide directing secretion. Cys65 and Cys102 form a disulfide bridge.

Belongs to the protease inhibitor I11 (ecotin) family. As to quaternary structure, homodimer.

It localises to the periplasm. Its function is as follows. General inhibitor of family S1 serine proteases. This Pseudomonas aeruginosa (strain LESB58) protein is Ecotin.